Reading from the N-terminus, the 410-residue chain is Elongation factor Tu, chloroplastic (410 aa).

The 206-residue stretch at 10-215 folds into the tr-type G domain; sequence KPHVNIGTIG…NVDSYIPTPE (206 aa). The tract at residues 19–26 is G1; that stretch reads GHVDHGKT. A GTP-binding site is contributed by 19–26; the sequence is GHVDHGKT. Thr-26 lines the Mg(2+) pocket. The interval 61–65 is G2; it reads GITIN. The G3 stretch occupies residues 82 to 85; it reads DCPG. GTP contacts are provided by residues 82–86 and 137–140; these read DCPGH and NKKD. A G4 region spans residues 137–140; that stretch reads NKKD. The segment at 175-177 is G5; that stretch reads SAL.

This sequence belongs to the TRAFAC class translation factor GTPase superfamily. Classic translation factor GTPase family. EF-Tu/EF-1A subfamily.

It localises to the plastid. Its subcellular location is the chloroplast. It catalyses the reaction GTP + H2O = GDP + phosphate + H(+). Its function is as follows. GTP hydrolase that promotes the GTP-dependent binding of aminoacyl-tRNA to the A-site of ribosomes during protein biosynthesis. This is Elongation factor Tu, chloroplastic (tufA) from Oltmannsiellopsis viridis (Marine flagellate).